A 140-amino-acid chain; its full sequence is Hexon-interlacing protein (140 aa).

The stretch at 100-127 forms a coiled coil; it reads LTALLAQLDSLTRELNVVSQQLLDLRQQ. S135 is modified (phosphoserine; by host).

Belongs to the adenoviridae hexon-interlacing protein family. Homotrimer. Interacts with hexon protein; this interaction tethers the hexons together. Self-interacts with adjacent proteins. Interacts with kinesin light chain KLC1; this interaction leads to capsid disruption at the nuclear pore complex during virus entry into host cell.

Its subcellular location is the virion. The protein resides in the host nucleus. Its function is as follows. Structural component of the virion that forms triskelion structures consisting of three molecules that stabilize three hexon trimers at the center of each icosahedral facet and fixes the peripentonal hexons. Dispensable for assembly. During virus entry, recruits the anterograde motor kinesin-1 to the capsid docked at the nuclear pore complex thereby subjecting the docked capsid to a pulling force. The resulting tension leads to capsid disruption, dispersion of capsid fragments toward cell periphery and eventually viral DNA entry into the host nucleus. The polypeptide is Hexon-interlacing protein (Human adenovirus C serotype 2 (HAdV-2)).